The sequence spans 932 residues: DNA mismatch repair protein MutS (932 aa).

615-622 contacts ATP; the sequence is GPNMAGKS.

Belongs to the DNA mismatch repair MutS family.

In terms of biological role, this protein is involved in the repair of mismatches in DNA. It is possible that it carries out the mismatch recognition step. This protein has a weak ATPase activity. The protein is DNA mismatch repair protein MutS of Clostridium botulinum (strain 657 / Type Ba4).